The chain runs to 221 residues: MKTGPLNESELEWLDDILTKYNTDHAILDVAELDGLLTAVLSSPQEIEPEQWLVAVWGGADYVPRWASEKEMTRFMNLAFQHMADTAERLNEFPEQFEPLFGLREVDGSELTIVEEWCFGYMRGVALSDWSTLPDSLKPALEAIALHGTEENFERVEKMSPEAFEESVDAIRLAALDLHAYWMAHPQEKAVQQPIKAEEKPGRNDPCPCGSGKKFKQCCLH.

This is an uncharacterized protein from Shigella flexneri.